Here is a 123-residue protein sequence, read N- to C-terminus: Large ribosomal subunit protein uL14 (123 aa).

It belongs to the universal ribosomal protein uL14 family. In terms of assembly, part of the 50S ribosomal subunit. Forms a cluster with proteins L3 and L19. In the 70S ribosome, L14 and L19 interact and together make contacts with the 16S rRNA in bridges B5 and B8.

Binds to 23S rRNA. Forms part of two intersubunit bridges in the 70S ribosome. This is Large ribosomal subunit protein uL14 from Buchnera aphidicola subsp. Acyrthosiphon kondoi (Acyrthosiphon kondoi symbiotic bacterium).